The sequence spans 254 residues: UPF0246 protein FTM_0239 (254 aa).

Belongs to the UPF0246 family.

The sequence is that of UPF0246 protein FTM_0239 from Francisella tularensis subsp. mediasiatica (strain FSC147).